We begin with the raw amino-acid sequence, 417 residues long: NADH-quinone oxidoreductase subunit D (417 aa).

The protein belongs to the complex I 49 kDa subunit family. In terms of assembly, NDH-1 is composed of 14 different subunits. Subunits NuoB, C, D, E, F, and G constitute the peripheral sector of the complex.

The protein localises to the cell inner membrane. The catalysed reaction is a quinone + NADH + 5 H(+)(in) = a quinol + NAD(+) + 4 H(+)(out). In terms of biological role, NDH-1 shuttles electrons from NADH, via FMN and iron-sulfur (Fe-S) centers, to quinones in the respiratory chain. The immediate electron acceptor for the enzyme in this species is believed to be ubiquinone. Couples the redox reaction to proton translocation (for every two electrons transferred, four hydrogen ions are translocated across the cytoplasmic membrane), and thus conserves the redox energy in a proton gradient. This Francisella tularensis subsp. novicida (strain U112) protein is NADH-quinone oxidoreductase subunit D.